A 311-amino-acid polypeptide reads, in one-letter code: Ribosomal protein L11 methyltransferase (311 aa).

Residues Thr162, Gly183, Asp205, and Asn248 each coordinate S-adenosyl-L-methionine.

The protein belongs to the methyltransferase superfamily. PrmA family.

The protein resides in the cytoplasm. The catalysed reaction is L-lysyl-[protein] + 3 S-adenosyl-L-methionine = N(6),N(6),N(6)-trimethyl-L-lysyl-[protein] + 3 S-adenosyl-L-homocysteine + 3 H(+). In terms of biological role, methylates ribosomal protein L11. In Bacillus licheniformis (strain ATCC 14580 / DSM 13 / JCM 2505 / CCUG 7422 / NBRC 12200 / NCIMB 9375 / NCTC 10341 / NRRL NRS-1264 / Gibson 46), this protein is Ribosomal protein L11 methyltransferase.